The chain runs to 342 residues: Tetraacyldisaccharide 4'-kinase (342 aa).

68 to 75 contributes to the ATP binding site; it reads TVGGTGKT.

It belongs to the LpxK family.

The enzyme catalyses a lipid A disaccharide + ATP = a lipid IVA + ADP + H(+). It functions in the pathway glycolipid biosynthesis; lipid IV(A) biosynthesis; lipid IV(A) from (3R)-3-hydroxytetradecanoyl-[acyl-carrier-protein] and UDP-N-acetyl-alpha-D-glucosamine: step 6/6. Its function is as follows. Transfers the gamma-phosphate of ATP to the 4'-position of a tetraacyldisaccharide 1-phosphate intermediate (termed DS-1-P) to form tetraacyldisaccharide 1,4'-bis-phosphate (lipid IVA). This Burkholderia thailandensis (strain ATCC 700388 / DSM 13276 / CCUG 48851 / CIP 106301 / E264) protein is Tetraacyldisaccharide 4'-kinase.